The sequence spans 406 residues: Nodal homolog (406 aa).

The N-terminal stretch at 1–18 is a signal peptide; that stretch reads MAFLTAVLYLGFACISQG. A propeptide spanning residues 19-281 is cleaved from the precursor; sequence LPTWPDRVES…RVPGIRRHRR (263 aa). Asn-71, Asn-136, and Asn-172 each carry an N-linked (GlcNAc...) asparagine glycan. The segment at 195-222 is disordered; that stretch reads KERAERGSGMSNAEFIDAPGPSQQYNPH. Disulfide bonds link Cys-306–Cys-372, Cys-335–Cys-403, and Cys-339–Cys-405. N-linked (GlcNAc...) asparagine glycosylation is present at Asn-344.

This sequence belongs to the TGF-beta family. Homodimer; disulfide-linked. Interacts with, and is inhibited by cer1 and gdf10/bmp3b. In the first phase of expression, localized to the vegetal region of the blastula. During gastrulation (stage 10.5), this expression disappears and instead becomes localized to the dorsal marginal zone, with enrichment in the organizer. During the second phase of expression in neurulae and tailbud embryos, expression restarts firstly in two symmetric patches near the posterior end of the notochord, and then in a large asymmetrical domain in the left lateral plate mesoderm.

Its subcellular location is the secreted. Cooperation and regulatory loops of multiple nodals are essential for mesendoderm patterning in early embryos. Essential for mesoderm formation and axial patterning during embryonic development. Activates the activin-like signaling pathway to induce dorsal and ventral mesoderm in animal cap ectoderm. In addition, also dorsalizes ventral marginal zone (VMZ) tissues during gastrulation. Acts in a downstream signaling cascade via cripto and cer1 to mediate cardiogenesis in embryonic mesoderm. Directs the orientation of the left-right axis by driving the left-specific gene cascade in the left lateral plate mesoderm. This is Nodal homolog from Xenopus laevis (African clawed frog).